A 289-amino-acid polypeptide reads, in one-letter code: Light-independent protochlorophyllide reductase iron-sulfur ATP-binding protein (289 aa).

ATP is bound by residues 10–15 (GIGKST) and K39. Residue S14 participates in Mg(2+) binding. [4Fe-4S] cluster-binding residues include C95 and C129. 180-181 (NR) contacts ATP.

The protein belongs to the NifH/BchL/ChlL family. Homodimer. Protochlorophyllide reductase is composed of three subunits; ChlL, ChlN and ChlB. The cofactor is [4Fe-4S] cluster.

The protein resides in the plastid. The protein localises to the chloroplast. The catalysed reaction is chlorophyllide a + oxidized 2[4Fe-4S]-[ferredoxin] + 2 ADP + 2 phosphate = protochlorophyllide a + reduced 2[4Fe-4S]-[ferredoxin] + 2 ATP + 2 H2O. The protein operates within porphyrin-containing compound metabolism; chlorophyll biosynthesis (light-independent). In terms of biological role, component of the dark-operative protochlorophyllide reductase (DPOR) that uses Mg-ATP and reduced ferredoxin to reduce ring D of protochlorophyllide (Pchlide) to form chlorophyllide a (Chlide). This reaction is light-independent. The L component serves as a unique electron donor to the NB-component of the complex, and binds Mg-ATP. The protein is Light-independent protochlorophyllide reductase iron-sulfur ATP-binding protein of Tetradesmus obliquus (Green alga).